Here is a 96-residue protein sequence, read N- to C-terminus: Putative translation initiation factor IF-1, chloroplastic (96 aa).

In terms of domain architecture, S1-like spans 18–57; the sequence is INYVSGKIRHSFIRILPGDRVKIEVSPYDSTKGRIIYRLH.

It belongs to the IF-1 family. As to quaternary structure, component of the 30S ribosomal translation pre-initiation complex which assembles on the 30S ribosome in the order IF-2 and IF-3, IF-1 and N-formylmethionyl-tRNA(fMet); mRNA recruitment can occur at any time during PIC assembly.

It localises to the plastid. The protein resides in the chloroplast. One of the essential components for the initiation of protein synthesis. Stabilizes the binding of IF-2 and IF-3 on the 30S subunit to which N-formylmethionyl-tRNA(fMet) subsequently binds. Helps modulate mRNA selection, yielding the 30S pre-initiation complex (PIC). Upon addition of the 50S ribosomal subunit IF-1, IF-2 and IF-3 are released leaving the mature 70S translation initiation complex. This chain is Putative translation initiation factor IF-1, chloroplastic (infA), found in Nicotiana tabacum (Common tobacco).